A 309-amino-acid chain; its full sequence is MEGAGAARKRSRPDTANGGAAGGKRSRETESFQTGLSSKLKPCTKFFSTIGCPFGEGCHFSHFVPGGYQAVAKTLNLGNPAVPAPARAPMDHAAGGNSHPASSGKTRMCTKYNTAEGCKFGDKCHFAHGERELGKPAYMSHESAMAPPMGGRYGGRPEPPPPAAMGPPAGNFGASATAKISVDASLAGGIIGKGGVNTKQICRVTGVKLSIRDHESDSNLKNIELEGNFDQIKQASNMVGELIATISPSTPAKKPAGSAAGAAPAGRGGPGGRSNYKTKLCENFVKGTCTFGDRCHFAHGENEQRKGAA.

The segment at 1-36 (MEGAGAARKRSRPDTANGGAAGGKRSRETESFQTGL) is disordered. 2 consecutive C3H1-type zinc fingers follow at residues 37 to 65 (SSKLKPCTKFFSTIGCPFGEGCHFSHFVP) and 103 to 131 (SGKTRMCTKYNTAEGCKFGDKCHFAHGER). The disordered stretch occupies residues 86-106 (ARAPMDHAAGGNSHPASSGKT). Positions 175 to 239 (SATAKISVDA…DQIKQASNMV (65 aa)) constitute a KH domain. The interval 249–273 (STPAKKPAGSAAGAAPAGRGGPGGR) is disordered. Residues 251-265 (PAKKPAGSAAGAAPA) are compositionally biased toward low complexity. The C3H1-type 3 zinc-finger motif lies at 275–302 (NYKTKLCENFVKGTCTFGDRCHFAHGEN).

This chain is Zinc finger CCCH domain-containing protein 31, found in Oryza sativa subsp. japonica (Rice).